Consider the following 125-residue polypeptide: Small ribosomal subunit protein eS6 (125 aa).

Belongs to the eukaryotic ribosomal protein eS6 family. As to quaternary structure, part of the 30S ribosomal subunit.

This chain is Small ribosomal subunit protein eS6, found in Thermococcus kodakarensis (strain ATCC BAA-918 / JCM 12380 / KOD1) (Pyrococcus kodakaraensis (strain KOD1)).